The primary structure comprises 1197 residues: Serine/threonine-protein kinase pakA (1197 aa).

Disordered regions lie at residues 1 to 96 (MEEK…PIYR), 328 to 383 (QKED…KNID), 430 to 468 (REEEEENEDRVERELASRRRQEEDRIKREEEEEEEEQRN), 485 to 543 (EEEE…NLMG), and 562 to 819 (NSSG…RVGT). A compositionally biased stretch (basic and acidic residues) spans 19 to 30 (QKFEQFLDKTDK). The segment covering 34-49 (ATRNNYRGPVSSSTGI) has biased composition (polar residues). Residues 51–69 (NDKEKKSHSYFKVREEGSN) show a composition bias toward basic and acidic residues. Residues 70–79 (KRPSSFSASN) show a composition bias toward polar residues. Composition is skewed to low complexity over residues 80-94 (PITPSSPQSTHSSPI) and 346-381 (NNNNNENNENDNNNNNNNNNNNNNNNNNNNNNNNKN). Residues 439 to 458 (RVERELASRRRQEEDRIKRE) show a composition bias toward basic and acidic residues. Low complexity predominate over residues 494–523 (SQLQSSQQQQKSSSTQRSSNTVTSTSSSST). A compositionally biased stretch (polar residues) spans 524–536 (GGDSNPSTSQKPT). Threonine 585 bears the Phosphothreonine; by PKB mark. Over residues 593–615 (SENTPLVSSIDNNGVNNKMSRSH) the composition is skewed to polar residues. Composition is skewed to low complexity over residues 636–653 (NVNNSNNNNNNNNINNNH) and 671–707 (SSSMSTPSISPSQAGNSATSTVPSSPISASTSMSSPT). The segment covering 718-727 (TTSTGSTRKG) has biased composition (polar residues). The segment covering 728–737 (SISEREDKKK) has biased composition (basic and acidic residues). The segment covering 739 to 756 (SSSSTSSSSSSNGGLSSS) has biased composition (low complexity). Positions 757–790 (GKDHKKDHSSEEKEKEKKSFFNKLFSKEKKDHHS) are enriched in basic and acidic residues. In terms of domain architecture, CRIB spans 817 to 830 (VGTPFNVKHDVHVN). Positions 911–1164 (YYNINKIGEG…SSSLLHHPFL (254 aa)) constitute a Protein kinase domain. ATP contacts are provided by residues 917–925 (IGEGGAGEV) and lysine 940. Aspartate 1032 (proton acceptor) is an active-site residue.

Belongs to the protein kinase superfamily. STE Ser/Thr protein kinase family. STE20 subfamily. Requires Mg(2+) as cofactor. Phosphorylation on Thr-585 results in cAMP-mediated activation and localization to the cytoskeleton. Colocalizes with myosin II to the cleavage furrow of cells undergoing cytokinesis and the posterior cortex of polarized cells.

It is found in the cytoplasm. Its subcellular location is the cytosol. The protein resides in the cytoskeleton. It catalyses the reaction L-seryl-[protein] + ATP = O-phospho-L-seryl-[protein] + ADP + H(+). It carries out the reaction L-threonyl-[protein] + ATP = O-phospho-L-threonyl-[protein] + ADP + H(+). Functionally, regulator of the myosin II component of the cytoskeleton: required for regulation of cytokinesis. Functions during chemotaxis, required for maintaining the direction of cell movement, suppressing lateral pseudopod extension, and proper retraction of the posterior of chemotaxing cells. This chain is Serine/threonine-protein kinase pakA (pakA), found in Dictyostelium discoideum (Social amoeba).